Consider the following 509-residue polypeptide: MDEDKGIDSKESGEYEDDFEKDLEWLINDKEKSNGSMIEVACKKEDDLDQELKEKETETELGPQLSDPDKPPKDEALPRRNDFISVPSIQPLDPISDSDSENSFQDSKPENQKDLEDEEDEEVRRYIMEKIIEANKLLQTQEPVNDKRERKLKFKDKLVDLEVPPLEDSDTCKVLLENETNMSGKLSQLCISGDLGQESMLMSVTNGGCEENDRKILVERDGKFELMNLQDIESQGFLPPISSANGMEHESSQLPLRSANLSVGGIKKEEPEAKIHIMTLSQAGEPLAQVPQPPANPKNRPSSAANPDLNKKTRRSSHRIQSAGVSPVTSTYCLSPRQKELQKQLERKRERLKREEEQRKLEEENEKKKENEMVFKAWLQKKREQVVEMRRVQRAKQIEDMSSRQVNRDPQQAFRLWLKKKHEEQMKERKTEELRKQEECLFFLRGTEGRERAFRQWLRRKQIEKIAEQQAVKERARQLRLEARRSKQLQSGLYSVPEAKAFRFTDHYN.

Disordered regions lie at residues 27 to 122 (INDK…EDEE) and 287 to 368 (LAQV…NEKK). Composition is skewed to basic and acidic residues over residues 41-58 (ACKK…KETE) and 67-82 (DPDK…RRND). The segment covering 319–333 (RIQSAGVSPVTSTYC) has biased composition (polar residues). Coiled coils occupy residues 335–377 (SPRQ…VFKA) and 418–488 (LKKK…RSKQ). Residues 337–368 (RQKELQKQLERKRERLKREEEQRKLEEENEKK) are compositionally biased toward basic and acidic residues.

Belongs to the CCDC181 family. In terms of assembly, homodimer. Interacts with HOOK1. Interacts with HOOK2. Interacts with HOOK3.

It localises to the cytoplasm. It is found in the cytoskeleton. Its subcellular location is the cell projection. The protein localises to the cilium. The protein resides in the flagellum. In terms of biological role, microtubule-binding protein that localizes to the microtubular manchette of elongating spermatids. This is Coiled-coil domain-containing protein 181 from Rattus norvegicus (Rat).